Consider the following 617-residue polypeptide: tRNA-dihydrouridine(47) synthase [NAD(P)(+)] (617 aa).

The C3H1-type zinc-finger motif lies at 42–70 (KENNALCPAISIGNECPYKENCKFPHDVE). The disordered stretch occupies residues 160 to 193 (EEKPDPSSKVSNIPEENRDATSAISEGKETESVS). Residues 245 to 247 (PLT) and Gln-308 each bind FMN. The Proton donor role is filled by Cys-340. Residues Lys-380, His-411, 460-462 (NGD), and 483-484 (AR) each bind FMN.

The protein belongs to the Dus family. Dus3 subfamily. It depends on FMN as a cofactor.

Its subcellular location is the cytoplasm. The protein localises to the nucleus. It carries out the reaction 5,6-dihydrouridine(47) in tRNA + NAD(+) = uridine(47) in tRNA + NADH + H(+). It catalyses the reaction 5,6-dihydrouridine(47) in tRNA + NADP(+) = uridine(47) in tRNA + NADPH + H(+). The catalysed reaction is a 5,6-dihydrouridine in mRNA + NAD(+) = a uridine in mRNA + NADH + H(+). The enzyme catalyses a 5,6-dihydrouridine in mRNA + NADP(+) = a uridine in mRNA + NADPH + H(+). In terms of biological role, catalyzes the synthesis of dihydrouridine, a modified base, in various RNAs, such as tRNAs and mRNAs. Modifies the uridine in position 47 (U47) in the D-loop of tRNAs. Also able to mediate formation of dihydrouridine outside of the D-loop of tRNAs. Catalyzes the synthesis of dihydrouridine in some mRNAs, thereby affecting their translation. Dus3-mediated dihydrouridylation of the mRNA encoding alpha-tubulin nda2 is required for meiotic chromosome segregation. The chain is tRNA-dihydrouridine(47) synthase [NAD(P)(+)] from Schizosaccharomyces pombe (strain 972 / ATCC 24843) (Fission yeast).